Here is a 329-residue protein sequence, read N- to C-terminus: NADH-quinone oxidoreductase subunit H (329 aa).

A run of 8 helical transmembrane segments spans residues 9-29, 79-99, 117-137, 162-182, 188-208, 243-263, 269-289, and 309-329; these read ILKV…LTYV, IAPV…PFFP, VGIL…LLAG, VSGL…LIEI, GGIF…FLIA, FFIG…LLFF, LWFI…LFLF, and WKVL…VLIL.

Belongs to the complex I subunit 1 family. NDH-1 is composed of 14 different subunits. Subunits NuoA, H, J, K, L, M, N constitute the membrane sector of the complex.

The protein localises to the cell inner membrane. The catalysed reaction is a quinone + NADH + 5 H(+)(in) = a quinol + NAD(+) + 4 H(+)(out). NDH-1 shuttles electrons from NADH, via FMN and iron-sulfur (Fe-S) centers, to quinones in the respiratory chain. The immediate electron acceptor for the enzyme in this species is believed to be ubiquinone. Couples the redox reaction to proton translocation (for every two electrons transferred, four hydrogen ions are translocated across the cytoplasmic membrane), and thus conserves the redox energy in a proton gradient. This subunit may bind ubiquinone. This chain is NADH-quinone oxidoreductase subunit H, found in Wolinella succinogenes (strain ATCC 29543 / DSM 1740 / CCUG 13145 / JCM 31913 / LMG 7466 / NCTC 11488 / FDC 602W) (Vibrio succinogenes).